A 424-amino-acid polypeptide reads, in one-letter code: Serine--tRNA ligase (424 aa).

Residue 233 to 235 participates in L-serine binding; sequence TAE. 264–266 is a binding site for ATP; it reads RRE. Glu-287 contributes to the L-serine binding site. 351–354 serves as a coordination point for ATP; sequence EISS. Ser-386 is an L-serine binding site.

This sequence belongs to the class-II aminoacyl-tRNA synthetase family. Type-1 seryl-tRNA synthetase subfamily. In terms of assembly, homodimer. The tRNA molecule binds across the dimer.

It is found in the cytoplasm. The catalysed reaction is tRNA(Ser) + L-serine + ATP = L-seryl-tRNA(Ser) + AMP + diphosphate + H(+). It carries out the reaction tRNA(Sec) + L-serine + ATP = L-seryl-tRNA(Sec) + AMP + diphosphate + H(+). Its pathway is aminoacyl-tRNA biosynthesis; selenocysteinyl-tRNA(Sec) biosynthesis; L-seryl-tRNA(Sec) from L-serine and tRNA(Sec): step 1/1. Functionally, catalyzes the attachment of serine to tRNA(Ser). Is also able to aminoacylate tRNA(Sec) with serine, to form the misacylated tRNA L-seryl-tRNA(Sec), which will be further converted into selenocysteinyl-tRNA(Sec). The protein is Serine--tRNA ligase of Pseudothermotoga lettingae (strain ATCC BAA-301 / DSM 14385 / NBRC 107922 / TMO) (Thermotoga lettingae).